The chain runs to 85 residues: Protein MC005 (85 aa).

As to quaternary structure, interacts with host IKBKG; this interaction prevents NF-kappa-B activation.

It is found in the host cytoplasm. Functionally, plays a role in the inhibition of the host NF-kappa-B pathway by preventing ubiquitin binding-dependent regulation of host IKBKB activation by IKBKG/NEMO. The polypeptide is Protein MC005 (MC005L) (Molluscum contagiosum virus subtype 1 (MOCV)).